The following is a 397-amino-acid chain: Dual-specificity RNA methyltransferase RlmN (397 aa).

Residue Glu130 is the Proton acceptor of the active site. A Radical SAM core domain is found at 138–377 (VEDRGAVCIS…ASPIRTPRGR (240 aa)). An intrachain disulfide couples Cys145 to Cys383. Positions 152, 156, and 159 each coordinate [4Fe-4S] cluster. S-adenosyl-L-methionine is bound by residues 209–210 (GE), Ser241, 263–265 (SLH), and Asn340. Catalysis depends on Cys383, which acts as the S-methylcysteine intermediate.

This sequence belongs to the radical SAM superfamily. RlmN family. [4Fe-4S] cluster serves as cofactor.

It is found in the cytoplasm. The catalysed reaction is adenosine(2503) in 23S rRNA + 2 reduced [2Fe-2S]-[ferredoxin] + 2 S-adenosyl-L-methionine = 2-methyladenosine(2503) in 23S rRNA + 5'-deoxyadenosine + L-methionine + 2 oxidized [2Fe-2S]-[ferredoxin] + S-adenosyl-L-homocysteine. It carries out the reaction adenosine(37) in tRNA + 2 reduced [2Fe-2S]-[ferredoxin] + 2 S-adenosyl-L-methionine = 2-methyladenosine(37) in tRNA + 5'-deoxyadenosine + L-methionine + 2 oxidized [2Fe-2S]-[ferredoxin] + S-adenosyl-L-homocysteine. Specifically methylates position 2 of adenine 2503 in 23S rRNA and position 2 of adenine 37 in tRNAs. m2A2503 modification seems to play a crucial role in the proofreading step occurring at the peptidyl transferase center and thus would serve to optimize ribosomal fidelity. The polypeptide is Dual-specificity RNA methyltransferase RlmN (Granulibacter bethesdensis (strain ATCC BAA-1260 / CGDNIH1)).